The chain runs to 165 residues: Nucleotide-binding protein TGRD_519 (165 aa).

This sequence belongs to the YajQ family.

In terms of biological role, nucleotide-binding protein. The chain is Nucleotide-binding protein TGRD_519 from Endomicrobium trichonymphae.